The primary structure comprises 1236 residues: Calcium-activated potassium channel subunit alpha-1 (1236 aa).

Gly residues predominate over residues 1 to 21 (MANGGGGGGGSSGGGGGGGGS). Positions 1 to 61 (MANGGGGGGG…SSSSSSSSSV (61 aa)) are disordered. The Extracellular segment spans residues 1-86 (MANGGGGGGG…VPCDSRGQRM (86 aa)). Low complexity predominate over residues 39–60 (SSSSSSSSSSSSSSSSSSSSSS). The chain crosses the membrane as a helical span at residues 87–107 (WWAFLASSMVTFFGGLFIILL). Over 108–178 (WRTLKYLWTV…MISAQTLTGR (71 aa)) the chain is Cytoplasmic. 3 S-palmitoyl cysteine lipidation sites follow: cysteine 118, cysteine 119, and cysteine 121. Residues 179 to 199 (VLVVLVFALSIGALVIYFIDS) form a helical membrane-spanning segment. Topologically, residues 200–214 (SNPIESCQNFYKDFT) are extracellular. Residues 215-235 (LQIDMAFNVFFLLYFGLRFIA) form a helical membrane-spanning segment. The Cytoplasmic portion of the chain corresponds to 236-239 (ANDK). Residues 240–260 (LWFWLEVNSVVDFFTVPPVFV) traverse the membrane as a helical segment. Residues 261–264 (SVYL) lie on the Extracellular side of the membrane. Residues 265 to 285 (NRSWLGLRFLRALRLIQFSEI) traverse the membrane as a helical segment. The Cytoplasmic portion of the chain corresponds to 286 to 300 (LQFLNILKTSNSIKL). A helical membrane pass occupies residues 301 to 321 (VNLLSIFISTWLTAAGFIHLV). The Extracellular segment spans residues 322-335 (ENSGDPWENFQNNQ). An intramembrane region (pore-forming) is located at residues 336 to 358 (ALTYWECVYLLMVTMSTVGYGDV). The Selectivity for potassium signature appears at 352 to 355 (TVGY). Residues 359-367 (YAKTTLGRL) are Extracellular-facing. The helical transmembrane segment at 368–388 (FMVFFILGGLAMFASYVPEII) threads the bilayer. Topologically, residues 389–1236 (ELIGNRKKYG…KQKYVQEERL (848 aa)) are cytoplasmic. An RCK N-terminal 1 domain is found at 407 to 549 (RKHIVVCGHI…WNWKEGDDAI (143 aa)). Residues glutamate 439, glutamine 462, and glutamate 464 each contribute to the Mg(2+) site. The interval 556-576 (LGFIAQSCLAQGLSTMLANLF) is segment S7. The interval 613–633 (LSFPTVCELCFVKLKLLMIAI) is segment S8. The heme-binding motif stretch occupies residues 677-681 (CKACH). The tract at residues 757–787 (EDEQPSTLSPKKKQRNGGMRNSPNTSPKLMR) is disordered. Threonine 763 carries the phosphothreonine modification. Phosphoserine is present on residues serine 765, serine 778, and serine 782. The segment at 837–857 (VLSGHVVVCIFGDVSSALIGL) is segment S9. One can recognise an RCK N-terminal 2 domain in the interval 839–983 (SGHVVVCIFG…MDRSSPDNSP (145 aa)). The residue at position 970 (threonine 970) is a Phosphothreonine. A phosphoserine mark is found at serine 978 and serine 982. The Calcium bowl signature appears at 1003 to 1025 (TELVNDTNVQFLDQDDDDDPDTE). The Ca(2+) site is built by glutamine 1012, aspartate 1015, aspartate 1018, and aspartate 1020. Residues 1032 to 1052 (FACGTAFAVSVLDSLMSATYF) form a segment S10 region. Residues 1186-1211 (RASLSHSSHSSQSSSKKSSSVHSIPS) show a composition bias toward low complexity. The tract at residues 1186 to 1236 (RASLSHSSHSSQSSSKKSSSVHSIPSTANRQNRPKSRESRDKQKYVQEERL) is disordered. Basic and acidic residues predominate over residues 1220-1236 (KSRESRDKQKYVQEERL). Residues serine 1221 and serine 1224 each carry the phosphoserine modification.

Belongs to the potassium channel family. Calcium-activated (TC 1.A.1.3) subfamily. KCa1.1/KCNMA1 sub-subfamily. As to quaternary structure, homotetramer; which constitutes the calcium-activated potassium channel. Interacts with RAB11B. Interacts with beta subunits KCNMB1, KCNMB2, KCNMB3 and KCNMB4. Interacts with gamma subunits LRRC26, LRRC38, LRRC52 and LRRC55. Beta and gamma subunits are accessory, and modulate its activity. Post-translationally, phosphorylated. Phosphorylation by kinases such as PKA and/or PKG. In smooth muscles, phosphorylation affects its activity. In terms of processing, palmitoylation by ZDHHC22 and ZDHHC23 within the intracellular linker between the S0 and S1 transmembrane domains regulates localization to the plasma membrane. Depalmitoylated by LYPLA1 and LYPLAL1, leading to retard exit from the trans-Golgi network. Widely expressed. Except in myocytes, it is almost ubiquitously expressed.

It is found in the cell membrane. The catalysed reaction is K(+)(in) = K(+)(out). Its activity is regulated as follows. Ethanol and carbon monoxide-bound heme increase channel activation. Heme inhibits channel activation. Functionally, potassium channel activated by both membrane depolarization or increase in cytosolic Ca(2+) that mediates export of K(+). It is also activated by the concentration of cytosolic Mg(2+). Its activation dampens the excitatory events that elevate the cytosolic Ca(2+) concentration and/or depolarize the cell membrane. It therefore contributes to repolarization of the membrane potential. Plays a key role in controlling excitability in a number of systems, such as regulation of the contraction of smooth muscle, the tuning of hair cells in the cochlea, regulation of transmitter release, and innate immunity. In smooth muscles, its activation by high level of Ca(2+), caused by ryanodine receptors in the sarcoplasmic reticulum, regulates the membrane potential. In cochlea cells, its number and kinetic properties partly determine the characteristic frequency of each hair cell and thereby helps to establish a tonotopic map. Kinetics of KCNMA1 channels are determined by alternative splicing, phosphorylation status and its combination with modulating beta subunits. Highly sensitive to both iberiotoxin (IbTx) and charybdotoxin (CTX). Possibly induces sleep when activated by melatonin and through melatonin receptor MTNR1A-dependent dissociation of G-beta and G-gamma subunits, leading to increased sensitivity to Ca(2+) and reduced synaptic transmission. In terms of biological role, potassium channel activated by both membrane depolarization or increase in cytosolic Ca(2+) that mediates export of K(+). In Homo sapiens (Human), this protein is Calcium-activated potassium channel subunit alpha-1.